The sequence spans 957 residues: Glycine dehydrogenase (decarboxylating) (957 aa).

N6-(pyridoxal phosphate)lysine is present on Lys702.

It belongs to the GcvP family. As to quaternary structure, the glycine cleavage system is composed of four proteins: P, T, L and H. The cofactor is pyridoxal 5'-phosphate.

The catalysed reaction is N(6)-[(R)-lipoyl]-L-lysyl-[glycine-cleavage complex H protein] + glycine + H(+) = N(6)-[(R)-S(8)-aminomethyldihydrolipoyl]-L-lysyl-[glycine-cleavage complex H protein] + CO2. The glycine cleavage system catalyzes the degradation of glycine. The P protein binds the alpha-amino group of glycine through its pyridoxal phosphate cofactor; CO(2) is released and the remaining methylamine moiety is then transferred to the lipoamide cofactor of the H protein. This is Glycine dehydrogenase (decarboxylating) from Bradyrhizobium sp. (strain ORS 278).